A 228-amino-acid polypeptide reads, in one-letter code: Carboxy-S-adenosyl-L-methionine synthase (228 aa).

Residues Tyr-30, 55–57 (GSS), 79–80 (DN), and 103–104 (DV) each bind S-adenosyl-L-methionine.

The protein belongs to the class I-like SAM-binding methyltransferase superfamily. Cx-SAM synthase family.

The catalysed reaction is prephenate + S-adenosyl-L-methionine = carboxy-S-adenosyl-L-methionine + 3-phenylpyruvate + H2O. Its function is as follows. Catalyzes the conversion of S-adenosyl-L-methionine (SAM) to carboxy-S-adenosyl-L-methionine (Cx-SAM). This chain is Carboxy-S-adenosyl-L-methionine synthase, found in Staphylococcus epidermidis (strain ATCC 35984 / DSM 28319 / BCRC 17069 / CCUG 31568 / BM 3577 / RP62A).